The sequence spans 492 residues: Aspartyl/glutamyl-tRNA(Asn/Gln) amidotransferase subunit B (492 aa).

The protein belongs to the GatB/GatE family. GatB subfamily. Heterotrimer of A, B and C subunits.

It catalyses the reaction L-glutamyl-tRNA(Gln) + L-glutamine + ATP + H2O = L-glutaminyl-tRNA(Gln) + L-glutamate + ADP + phosphate + H(+). It carries out the reaction L-aspartyl-tRNA(Asn) + L-glutamine + ATP + H2O = L-asparaginyl-tRNA(Asn) + L-glutamate + ADP + phosphate + 2 H(+). Its function is as follows. Allows the formation of correctly charged Asn-tRNA(Asn) or Gln-tRNA(Gln) through the transamidation of misacylated Asp-tRNA(Asn) or Glu-tRNA(Gln) in organisms which lack either or both of asparaginyl-tRNA or glutaminyl-tRNA synthetases. The reaction takes place in the presence of glutamine and ATP through an activated phospho-Asp-tRNA(Asn) or phospho-Glu-tRNA(Gln). The sequence is that of Aspartyl/glutamyl-tRNA(Asn/Gln) amidotransferase subunit B from Azorhizobium caulinodans (strain ATCC 43989 / DSM 5975 / JCM 20966 / LMG 6465 / NBRC 14845 / NCIMB 13405 / ORS 571).